A 58-amino-acid chain; its full sequence is Large ribosomal subunit protein uL30 (58 aa).

It belongs to the universal ribosomal protein uL30 family. As to quaternary structure, part of the 50S ribosomal subunit.

In Buchnera aphidicola subsp. Baizongia pistaciae (strain Bp), this protein is Large ribosomal subunit protein uL30.